Reading from the N-terminus, the 188-residue chain is RWD domain-containing protein 4 (188 aa).

S2 carries the post-translational modification N-acetylserine. Residues 9–111 enclose the RWD domain; that stretch reads MELEALRSIY…EYAKDNKEQF (103 aa). A disordered region spans residues 132-167; that stretch reads TPNTAPSSKKKDKKEQLSKAQKRKLADKTDHKGELP. Residues 155 to 166 show a composition bias toward basic and acidic residues; the sequence is KLADKTDHKGEL.

This chain is RWD domain-containing protein 4 (RWDD4), found in Homo sapiens (Human).